Reading from the N-terminus, the 165-residue chain is Phosphopantetheine adenylyltransferase (165 aa).

Residue S10 coordinates substrate. Residues 10 to 11 and H18 contribute to the ATP site; that span reads SF. Substrate contacts are provided by K42, T79, and R93. ATP-binding positions include 94–96, E104, and 129–135; these read GLR and VRPITAT.

This sequence belongs to the bacterial CoaD family. In terms of assembly, homohexamer. It depends on Mg(2+) as a cofactor.

The protein resides in the cytoplasm. The enzyme catalyses (R)-4'-phosphopantetheine + ATP + H(+) = 3'-dephospho-CoA + diphosphate. It functions in the pathway cofactor biosynthesis; coenzyme A biosynthesis; CoA from (R)-pantothenate: step 4/5. Reversibly transfers an adenylyl group from ATP to 4'-phosphopantetheine, yielding dephospho-CoA (dPCoA) and pyrophosphate. This chain is Phosphopantetheine adenylyltransferase, found in Afipia carboxidovorans (strain ATCC 49405 / DSM 1227 / KCTC 32145 / OM5) (Oligotropha carboxidovorans).